We begin with the raw amino-acid sequence, 236 residues long: 2-C-methyl-D-erythritol 4-phosphate cytidylyltransferase (236 aa).

It belongs to the IspD/TarI cytidylyltransferase family. IspD subfamily. Homodimer.

The enzyme catalyses 2-C-methyl-D-erythritol 4-phosphate + CTP + H(+) = 4-CDP-2-C-methyl-D-erythritol + diphosphate. It functions in the pathway isoprenoid biosynthesis; isopentenyl diphosphate biosynthesis via DXP pathway; isopentenyl diphosphate from 1-deoxy-D-xylulose 5-phosphate: step 2/6. Its function is as follows. Catalyzes the formation of 4-diphosphocytidyl-2-C-methyl-D-erythritol from CTP and 2-C-methyl-D-erythritol 4-phosphate (MEP). The sequence is that of 2-C-methyl-D-erythritol 4-phosphate cytidylyltransferase from Salmonella paratyphi A (strain ATCC 9150 / SARB42).